Here is a 299-residue protein sequence, read N- to C-terminus: tRNA dimethylallyltransferase (299 aa).

13 to 20 serves as a coordination point for ATP; the sequence is GPTASGKT. 15-20 is a substrate binding site; it reads TASGKT. Positions 38–41 are interaction with substrate tRNA; the sequence is DSRQ.

Belongs to the IPP transferase family. In terms of assembly, monomer. It depends on Mg(2+) as a cofactor.

It catalyses the reaction adenosine(37) in tRNA + dimethylallyl diphosphate = N(6)-dimethylallyladenosine(37) in tRNA + diphosphate. In terms of biological role, catalyzes the transfer of a dimethylallyl group onto the adenine at position 37 in tRNAs that read codons beginning with uridine, leading to the formation of N6-(dimethylallyl)adenosine (i(6)A). In Synechococcus sp. (strain CC9605), this protein is tRNA dimethylallyltransferase.